Reading from the N-terminus, the 215-residue chain is Ubiquitin-conjugating enzyme E2 S (215 aa).

The UBC core domain maps to 9–155 (DVIKRVVKEL…AKLFTSIHAS (147 aa)). The active-site Glycyl thioester intermediate is the Cys93. Residues 159–215 (IDSNNNNENSTTTPTTTTTATTPSTNTASISSPVKKKTETTNSTTTKVQPKKSLKRL) are disordered. The segment covering 161–190 (SNNNNENSTTTPTTTTTATTPSTNTASISS) has biased composition (low complexity).

Belongs to the ubiquitin-conjugating enzyme family.

The catalysed reaction is S-ubiquitinyl-[E1 ubiquitin-activating enzyme]-L-cysteine + [E2 ubiquitin-conjugating enzyme]-L-cysteine = [E1 ubiquitin-activating enzyme]-L-cysteine + S-ubiquitinyl-[E2 ubiquitin-conjugating enzyme]-L-cysteine.. The protein operates within protein modification; protein ubiquitination. Functionally, catalyzes the covalent attachment of ubiquitin to other proteins. Acts as an essential factor of the anaphase promoting complex/cyclosome (APC/C), a cell cycle-regulated ubiquitin ligase that controls progression through mitosis. Acts by specifically elongating polyubiquitin chains initiated by the E2 enzyme ubch10 on APC/C substrates, enhancing the degradation of APC/C substrates by the proteasome and promoting mitotic exit. In Dictyostelium discoideum (Social amoeba), this protein is Ubiquitin-conjugating enzyme E2 S (ube2s).